The sequence spans 114 residues: Integration host factor subunit alpha (114 aa).

It belongs to the bacterial histone-like protein family. In terms of assembly, heterodimer of an alpha and a beta chain.

Functionally, this protein is one of the two subunits of integration host factor, a specific DNA-binding protein that functions in genetic recombination as well as in transcriptional and translational control. The chain is Integration host factor subunit alpha from Afipia carboxidovorans (strain ATCC 49405 / DSM 1227 / KCTC 32145 / OM5) (Oligotropha carboxidovorans).